Consider the following 580-residue polypeptide: D-erythrulose kinase (580 aa).

In terms of domain architecture, DhaK spans 7 to 327 (DPARFTEDML…WAAPADTPAY (321 aa)). The active-site Tele-hemiaminal-histidine intermediate is His-217. The interval 329 to 360 (KGAAQQHVSGERRSEATARSASSGPKLAELSD) is disordered. The DhaL domain occupies 368-570 (RLVARAFDAM…LALCARTVAD (203 aa)). ATP is bound by residues 397-403 (DGDHGRG), 443-444 (TS), Gly-485, Arg-542, and 555-557 (DAG).

It catalyses the reaction D-erythrulose + ATP = D-erythrulose 4-phosphate + ADP + H(+). It participates in carbohydrate metabolism; erythritol degradation. It functions in the pathway carbohydrate metabolism; D-threitol degradation. Functionally, catalyzes the phosphorylation of D-erythrulose to D-erythrulose-4P. Involved in the degradation pathways of erythritol and D-threitol, that allow M.smegmatis to grow on these compounds as the sole carbon source. In Mycolicibacterium smegmatis (strain ATCC 700084 / mc(2)155) (Mycobacterium smegmatis), this protein is D-erythrulose kinase.